A 264-amino-acid polypeptide reads, in one-letter code: 3-methyl-2-oxobutanoate hydroxymethyltransferase (264 aa).

Residues Asp-45 and Asp-84 each contribute to the Mg(2+) site. 3-methyl-2-oxobutanoate-binding positions include 45–46 (DS), Asp-84, and Lys-112. Glu-114 lines the Mg(2+) pocket. The Proton acceptor role is filled by Glu-181.

Belongs to the PanB family. Homodecamer; pentamer of dimers. Mg(2+) serves as cofactor.

The protein resides in the cytoplasm. The catalysed reaction is 3-methyl-2-oxobutanoate + (6R)-5,10-methylene-5,6,7,8-tetrahydrofolate + H2O = 2-dehydropantoate + (6S)-5,6,7,8-tetrahydrofolate. Its pathway is cofactor biosynthesis; (R)-pantothenate biosynthesis; (R)-pantoate from 3-methyl-2-oxobutanoate: step 1/2. Its function is as follows. Catalyzes the reversible reaction in which hydroxymethyl group from 5,10-methylenetetrahydrofolate is transferred onto alpha-ketoisovalerate to form ketopantoate. The polypeptide is 3-methyl-2-oxobutanoate hydroxymethyltransferase (Pectobacterium atrosepticum (strain SCRI 1043 / ATCC BAA-672) (Erwinia carotovora subsp. atroseptica)).